Here is a 100-residue protein sequence, read N- to C-terminus: Urease subunit gamma (100 aa).

This sequence belongs to the urease gamma subunit family. As to quaternary structure, heterotrimer of UreA (gamma), UreB (beta) and UreC (alpha) subunits. Three heterotrimers associate to form the active enzyme.

The protein localises to the cytoplasm. The enzyme catalyses urea + 2 H2O + H(+) = hydrogencarbonate + 2 NH4(+). It functions in the pathway nitrogen metabolism; urea degradation; CO(2) and NH(3) from urea (urease route): step 1/1. The chain is Urease subunit gamma from Clostridium perfringens.